Reading from the N-terminus, the 434-residue chain is 26S proteasome regulatory subunit 6A (434 aa).

Alanine 2 bears the N-acetylalanine mark. Position 180 is a phosphotyrosine (tyrosine 180). ATP is bound at residue 222–229; it reads GPPGTGKT.

Belongs to the AAA ATPase family. N-acetylated by NAT1.

It localises to the cytoplasm. It is found in the nucleus. Functionally, the 26S proteasome is involved in the ATP-dependent degradation of ubiquitinated proteins. The regulatory (or ATPase) complex confers ATP dependency and substrate specificity to the 26S complex. The sequence is that of 26S proteasome regulatory subunit 6A (RPT5) from Saccharomyces cerevisiae (strain ATCC 204508 / S288c) (Baker's yeast).